Here is a 480-residue protein sequence, read N- to C-terminus: uncharacterized protein (480 aa).

The N-terminal stretch at M1–A21 is a signal peptide. 2 disordered regions span residues S38–C72 and S116–T147. Positions L51–D60 are enriched in low complexity. Over residues L133–N144 the composition is skewed to polar residues. The chain crosses the membrane as a helical span at residues Y153–G173. A disordered region spans residues Q404–H480. A compositionally biased stretch (basic and acidic residues) spans N407–R465. A coiled-coil region spans residues S411–V467. A compositionally biased stretch (basic residues) spans Q466–H480.

It is found in the membrane. This is an uncharacterized protein from Arabidopsis thaliana (Mouse-ear cress).